The primary structure comprises 654 residues: Heat shock 70 kDa protein 2 (654 aa).

Over residues Ala612–Asp646 the composition is skewed to gly residues. Residues Ala612 to Asp654 are disordered.

The protein belongs to the heat shock protein 70 family.

The protein is Heat shock 70 kDa protein 2 (HSP70-2) of Paracoccidioides lutzii (strain ATCC MYA-826 / Pb01) (Paracoccidioides brasiliensis).